The primary structure comprises 542 residues: Protein MPA43 (542 aa).

This Saccharomyces cerevisiae (strain ATCC 204508 / S288c) (Baker's yeast) protein is Protein MPA43 (MPA43).